Consider the following 513-residue polypeptide: Histidine ammonia-lyase (513 aa).

A cross-link (5-imidazolinone (Ala-Gly)) is located at residues 144–146 (ASG). S145 bears the 2,3-didehydroalanine (Ser) mark.

This sequence belongs to the PAL/histidase family. In terms of processing, contains an active site 4-methylidene-imidazol-5-one (MIO), which is formed autocatalytically by cyclization and dehydration of residues Ala-Ser-Gly.

It localises to the cytoplasm. The enzyme catalyses L-histidine = trans-urocanate + NH4(+). Its pathway is amino-acid degradation; L-histidine degradation into L-glutamate; N-formimidoyl-L-glutamate from L-histidine: step 1/3. In Streptococcus pyogenes serotype M3 (strain ATCC BAA-595 / MGAS315), this protein is Histidine ammonia-lyase.